The following is a 313-amino-acid chain: Malate dehydrogenase (313 aa).

NAD(+)-binding positions include 8-13 and Asp33; that span reads GAGNVG. Substrate is bound by residues Arg83 and Arg89. NAD(+)-binding positions include Asn96 and 119-121; that span reads ISN. Residues Asn121 and Arg152 each coordinate substrate. Catalysis depends on His176, which acts as the Proton acceptor.

It belongs to the LDH/MDH superfamily. MDH type 3 family.

The catalysed reaction is (S)-malate + NAD(+) = oxaloacetate + NADH + H(+). Catalyzes the reversible oxidation of malate to oxaloacetate. The polypeptide is Malate dehydrogenase (Parabacteroides distasonis (strain ATCC 8503 / DSM 20701 / CIP 104284 / JCM 5825 / NCTC 11152)).